We begin with the raw amino-acid sequence, 259 residues long: Deoxyribose-phosphate aldolase (259 aa).

Aspartate 101 functions as the Proton donor/acceptor in the catalytic mechanism. The Schiff-base intermediate with acetaldehyde role is filled by lysine 166. Lysine 200 serves as the catalytic Proton donor/acceptor.

This sequence belongs to the DeoC/FbaB aldolase family. DeoC type 2 subfamily.

It is found in the cytoplasm. It catalyses the reaction 2-deoxy-D-ribose 5-phosphate = D-glyceraldehyde 3-phosphate + acetaldehyde. It participates in carbohydrate degradation; 2-deoxy-D-ribose 1-phosphate degradation; D-glyceraldehyde 3-phosphate and acetaldehyde from 2-deoxy-alpha-D-ribose 1-phosphate: step 2/2. Its function is as follows. Catalyzes a reversible aldol reaction between acetaldehyde and D-glyceraldehyde 3-phosphate to generate 2-deoxy-D-ribose 5-phosphate. The chain is Deoxyribose-phosphate aldolase from Glaesserella parasuis serovar 5 (strain SH0165) (Haemophilus parasuis).